The primary structure comprises 367 residues: Peptide chain release factor 2 (367 aa).

N5-methylglutamine is present on glutamine 254.

This sequence belongs to the prokaryotic/mitochondrial release factor family. Methylated by PrmC. Methylation increases the termination efficiency of RF2.

It is found in the cytoplasm. Peptide chain release factor 2 directs the termination of translation in response to the peptide chain termination codons UGA and UAA. The sequence is that of Peptide chain release factor 2 from Leptospira borgpetersenii serovar Hardjo-bovis (strain JB197).